Here is a 95-residue protein sequence, read N- to C-terminus: Ferredoxin-4 (95 aa).

The 2Fe-2S ferredoxin-type domain occupies 2–95; that stretch reads DKATLTFTDV…LGGAVKVRPA (94 aa). The [2Fe-2S] cluster site is built by C38, C43, C46, and C81.

The protein belongs to the 2Fe2S plant-type ferredoxin family. Requires [2Fe-2S] cluster as cofactor.

Functionally, ferredoxins are iron-sulfur proteins that transfer electrons in a wide variety of metabolic reactions. This ferredoxin is required for nitrogen fixation. This chain is Ferredoxin-4 (fdxC), found in Rhodobacter capsulatus (Rhodopseudomonas capsulata).